We begin with the raw amino-acid sequence, 1477 residues long: Ring canal kelch protein (1477 aa).

3 disordered regions span residues 19-62 (LSNG…PGLG), 76-96 (LLQQ…EGSG), and 108-137 (SQNS…YSNE). Residues 20–46 (SNGNSNNNNQQQQQQQQGQNPQQPAQN) are compositionally biased toward low complexity. Phosphoserine occurs at positions 108 and 111. One can recognise a BTB domain in the interval 157 to 223 (CDVILVADDV…VYTATVEVNE (67 aa)). Kelch repeat units lie at residues 404-449 (ILLV…VLGD), 450-496 (KVYA…VLNG), 498-543 (IYAV…VVHG), 545-592 (LYAV…VLNN), 594-639 (LYAV…AHDG), and 641-687 (LYVV…MIDK). Sec690 is a non-standard amino acid (selenocysteine). Disordered stretches follow at residues 744–841 (PAAP…PQRI), 1119–1200 (HSAA…GNGT), 1291–1326 (RDAN…QYED), 1359–1416 (PLLQ…FKPK), and 1446–1477 (PVSL…EHND). Composition is skewed to low complexity over residues 763–813 (APIG…ANNN) and 820–839 (AAPA…QQPQ). A compositionally biased stretch (polar residues) spans 1125–1137 (IPSSSNINANRTT). The span at 1166 to 1192 (KTTSTGSGKSVTLAKKTSTAAARSSSS) shows a compositional bias: low complexity. Composition is skewed to low complexity over residues 1374–1391 (QQRR…QSQQ) and 1456–1477 (TTSS…EHND).

As to expression, both proteins are expressed in ovaries, male testis, ovariectomized females, cuticle, salivary gland and imaginal disks. Kelch short protein is the predominant form and is also expressed in fat bodies. On entry into metamorphosis levels of full-length protein increase in testis and imaginal disks.

It is found in the cytoplasm. Its subcellular location is the cytoskeleton. In terms of biological role, component of ring canals that regulates the flow of cytoplasm between cells. May be involved in the regulation of cytoplasm flow from nurse cells to the oocyte during oogenesis. Binds actin. The sequence is that of Ring canal kelch protein (kel) from Drosophila melanogaster (Fruit fly).